The primary structure comprises 475 residues: Ribulose bisphosphate carboxylase large chain (475 aa).

The propeptide occupies 1 to 2 (MS). N-acetylproline is present on proline 3. At lysine 14 the chain carries N6,N6,N6-trimethyllysine. Asparagine 123 and threonine 173 together coordinate substrate. Lysine 175 (proton acceptor) is an active-site residue. Lysine 177 provides a ligand contact to substrate. Lysine 201, aspartate 203, and glutamate 204 together coordinate Mg(2+). Lysine 201 bears the N6-carboxylysine mark. Residue histidine 294 is the Proton acceptor of the active site. The substrate site is built by arginine 295, histidine 327, and serine 379.

This sequence belongs to the RuBisCO large chain family. Type I subfamily. In terms of assembly, heterohexadecamer of 8 large chains and 8 small chains; disulfide-linked. The disulfide link is formed within the large subunit homodimers. Mg(2+) is required as a cofactor. The disulfide bond which can form in the large chain dimeric partners within the hexadecamer appears to be associated with oxidative stress and protein turnover.

Its subcellular location is the plastid. The protein localises to the chloroplast. The enzyme catalyses 2 (2R)-3-phosphoglycerate + 2 H(+) = D-ribulose 1,5-bisphosphate + CO2 + H2O. It carries out the reaction D-ribulose 1,5-bisphosphate + O2 = 2-phosphoglycolate + (2R)-3-phosphoglycerate + 2 H(+). RuBisCO catalyzes two reactions: the carboxylation of D-ribulose 1,5-bisphosphate, the primary event in carbon dioxide fixation, as well as the oxidative fragmentation of the pentose substrate in the photorespiration process. Both reactions occur simultaneously and in competition at the same active site. The sequence is that of Ribulose bisphosphate carboxylase large chain from Spirogyra maxima (Green alga).